Here is a 241-residue protein sequence, read N- to C-terminus: Orotidine 5'-phosphate decarboxylase (241 aa).

Residues D15, K37, 64-73, T126, R187, Q196, G216, and R217 each bind substrate; that span reads DLKYHDIPNT. Residue K66 is the Proton donor of the active site.

The protein belongs to the OMP decarboxylase family. Type 1 subfamily. Homodimer.

The catalysed reaction is orotidine 5'-phosphate + H(+) = UMP + CO2. Its pathway is pyrimidine metabolism; UMP biosynthesis via de novo pathway; UMP from orotate: step 2/2. Its function is as follows. Catalyzes the decarboxylation of orotidine 5'-monophosphate (OMP) to uridine 5'-monophosphate (UMP). The sequence is that of Orotidine 5'-phosphate decarboxylase from Geotalea uraniireducens (strain Rf4) (Geobacter uraniireducens).